The primary structure comprises 214 residues: GTP-binding nuclear protein GSP1/Ran (214 aa).

Residues 4 to 168 (EVPTFKLVLV…LWLARKLAGN (165 aa)) form the Small GTPase Ran-type domain. Position 15 to 22 (15 to 22 (DGGTGKTT)) interacts with GTP. The switch-I stretch occupies residues 34-42 (KKYIATIGV). GTP-binding positions include Gly-65, 119 to 122 (NKVD), and 147 to 149 (SAK). The interval 65-81 (GQEKFGGLRDGYYINAQ) is switch-II.

Belongs to the small GTPase superfamily. Ran family. In terms of assembly, found in a nuclear export complex with RanGTP, exportin and pre-miRNA.

It localises to the nucleus. Its function is as follows. GTP-binding protein involved in nucleocytoplasmic transport. Required for the import of protein into the nucleus and also for RNA export. Involved in chromatin condensation and control of cell cycle. In Eremothecium gossypii (strain ATCC 10895 / CBS 109.51 / FGSC 9923 / NRRL Y-1056) (Yeast), this protein is GTP-binding nuclear protein GSP1/Ran (GSP1).